We begin with the raw amino-acid sequence, 163 residues long: Neurotrophin-3 (163 aa).

A signal peptide spans 1–3; sequence IQS. A propeptide spanning residues 4–119 is cleaved from the precursor; sequence TSMDQGILTE…VLNRTSRRKR (116 aa). The segment at 35 to 61 is disordered; that stretch reads KQTARTKDGTQTTVKKSEAEADATASQ. N112 is a glycosylation site (N-linked (GlcNAc...) asparagine).

The protein belongs to the NGF-beta family.

It is found in the secreted. Functionally, seems to promote the survival of visceral and proprioceptive sensory neurons. The protein is Neurotrophin-3 (NTF3) of Corallus caninus (Emerald tree boa).